Here is a 733-residue protein sequence, read N- to C-terminus: Catalase-peroxidase (733 aa).

The N-terminal stretch at 1 to 23 (MNNESKCPFAAAHGVRSPATARA) is a signal peptide. The segment at residues 96-224 (WHSAGTYRTA…LAAVQMGLIY (129 aa)) is a cross-link (tryptophyl-tyrosyl-methioninium (Trp-Tyr) (with M-250)). Histidine 97 serves as the catalytic Proton acceptor. The segment at residues 224–250 (YVNPEGPDGNPDPVASGRDVRETFARM) is a cross-link (tryptophyl-tyrosyl-methioninium (Tyr-Met) (with W-96)). Residue histidine 265 coordinates heme b.

This sequence belongs to the peroxidase family. Peroxidase/catalase subfamily. In terms of assembly, homodimer or homotetramer. Requires heme b as cofactor. Post-translationally, formation of the three residue Trp-Tyr-Met cross-link is important for the catalase, but not the peroxidase activity of the enzyme.

The catalysed reaction is H2O2 + AH2 = A + 2 H2O. It carries out the reaction 2 H2O2 = O2 + 2 H2O. In terms of biological role, bifunctional enzyme with both catalase and broad-spectrum peroxidase activity. This is Catalase-peroxidase from Azoarcus sp. (strain BH72).